We begin with the raw amino-acid sequence, 670 residues long: tRNA 5-methylaminomethyl-2-thiouridine biosynthesis bifunctional protein MnmC (670 aa).

The tract at residues 1-242 is tRNA (mnm(5)s(2)U34)-methyltransferase; that stretch reads MTFSVQHAEI…KRECLSGLKI (242 aa). Residues 269-670 are FAD-dependent cmnm(5)s(2)U34 oxidoreductase; the sequence is IGGGIASFCA…KKWLKGSKVE (402 aa).

It in the N-terminal section; belongs to the methyltransferase superfamily. tRNA (mnm(5)s(2)U34)-methyltransferase family. The protein in the C-terminal section; belongs to the DAO family. FAD serves as cofactor.

It is found in the cytoplasm. It carries out the reaction 5-aminomethyl-2-thiouridine(34) in tRNA + S-adenosyl-L-methionine = 5-methylaminomethyl-2-thiouridine(34) in tRNA + S-adenosyl-L-homocysteine + H(+). Its function is as follows. Catalyzes the last two steps in the biosynthesis of 5-methylaminomethyl-2-thiouridine (mnm(5)s(2)U) at the wobble position (U34) in tRNA. Catalyzes the FAD-dependent demodification of cmnm(5)s(2)U34 to nm(5)s(2)U34, followed by the transfer of a methyl group from S-adenosyl-L-methionine to nm(5)s(2)U34, to form mnm(5)s(2)U34. The chain is tRNA 5-methylaminomethyl-2-thiouridine biosynthesis bifunctional protein MnmC from Haemophilus influenzae (strain 86-028NP).